The primary structure comprises 199 residues: 7-methyl-GTP pyrophosphatase (199 aa).

The active-site Proton acceptor is the aspartate 74.

The protein belongs to the Maf family. YceF subfamily. It depends on a divalent metal cation as a cofactor.

The protein localises to the cytoplasm. It carries out the reaction N(7)-methyl-GTP + H2O = N(7)-methyl-GMP + diphosphate + H(+). Nucleoside triphosphate pyrophosphatase that hydrolyzes 7-methyl-GTP (m(7)GTP). May have a dual role in cell division arrest and in preventing the incorporation of modified nucleotides into cellular nucleic acids. This chain is 7-methyl-GTP pyrophosphatase, found in Cupriavidus pinatubonensis (strain JMP 134 / LMG 1197) (Cupriavidus necator (strain JMP 134)).